A 118-amino-acid chain; its full sequence is Putative pterin-4-alpha-carbinolamine dehydratase (118 aa).

Belongs to the pterin-4-alpha-carbinolamine dehydratase family.

It catalyses the reaction (4aS,6R)-4a-hydroxy-L-erythro-5,6,7,8-tetrahydrobiopterin = (6R)-L-erythro-6,7-dihydrobiopterin + H2O. The protein is Putative pterin-4-alpha-carbinolamine dehydratase of Xanthomonas campestris pv. campestris (strain 8004).